A 230-amino-acid polypeptide reads, in one-letter code: Dephospho-CoA kinase (230 aa).

The segment at 1–21 is disordered; that stretch reads MSKYAAAPSPYSHQPQTPEHK. The DPCK domain occupies 26 to 225; sequence VVGLTGGIGS…QDYLKLAQQL (200 aa). 34–39 is a binding site for ATP; the sequence is GSGKSA.

This sequence belongs to the CoaE family.

It localises to the cytoplasm. It carries out the reaction 3'-dephospho-CoA + ATP = ADP + CoA + H(+). It participates in cofactor biosynthesis; coenzyme A biosynthesis; CoA from (R)-pantothenate: step 5/5. In terms of biological role, catalyzes the phosphorylation of the 3'-hydroxyl group of dephosphocoenzyme A to form coenzyme A. The sequence is that of Dephospho-CoA kinase from Psychrobacter cryohalolentis (strain ATCC BAA-1226 / DSM 17306 / VKM B-2378 / K5).